The primary structure comprises 231 residues: MPQLEASLELDFQSESYKDAYSRINAIVIEGEQEAFDNYNRLAEMLPDQRDELHKLAKMEQRHMKGFMACGKNLSVTPDMGFAQKFFERLHENFKAAAAEGKVVTCLLIQSLIIECFAIAAYNIYIPVADAFARKITEGVVRDEYLHRNFGEEWLKANFDASKAELEEANRQNLPLVWLMLNEVADDARELGMERESLVEDFMIAYGEALENIGFTTREIMRMSAYGLAAV.

Positions 32, 60, 63, 115, and 147 each coordinate Fe cation.

This sequence belongs to the aldehyde decarbonylase family. The cofactor is Binds 2 metal cations per subunit. The catalytic dinuclear metal-binding site could be either a di-iron or a manganese-iron cofactor..

It catalyses the reaction a long-chain fatty aldehyde + 2 NADPH + O2 + H(+) = a long-chain alkane + formate + 2 NADP(+) + H2O. In terms of biological role, catalyzes the decarbonylation of fatty aldehydes to alkanes. Requires the presence of ferredoxin, ferredoxin reductase and NADPH for in vitro decarbonylase activity. Involved in the biosynthesis of alkanes, mainly heptadecane and pentadecane. This Synechococcus elongatus (strain ATCC 33912 / PCC 7942 / FACHB-805) (Anacystis nidulans R2) protein is Aldehyde decarbonylase.